The following is a 170-amino-acid chain: Adenine phosphoribosyltransferase (170 aa).

The protein belongs to the purine/pyrimidine phosphoribosyltransferase family. As to quaternary structure, homodimer.

It is found in the cytoplasm. The enzyme catalyses AMP + diphosphate = 5-phospho-alpha-D-ribose 1-diphosphate + adenine. It participates in purine metabolism; AMP biosynthesis via salvage pathway; AMP from adenine: step 1/1. Catalyzes a salvage reaction resulting in the formation of AMP, that is energically less costly than de novo synthesis. In Flavobacterium johnsoniae (strain ATCC 17061 / DSM 2064 / JCM 8514 / BCRC 14874 / CCUG 350202 / NBRC 14942 / NCIMB 11054 / UW101) (Cytophaga johnsonae), this protein is Adenine phosphoribosyltransferase.